The chain runs to 183 residues: QYGDYGYPYQQYHDYSDDGWVNLNRQGFSYQCPHGQVVVAVRSIFNKKEGSDRQWNYACMPTPQSLGEPSECWWEEINRAGMEWYQTCSNNGLVAGFQSRYFESVLDREWQFYCCRYSKRCPYSCWMTTEYPGHYGEEMDMISYNYDYYMRGATTTFSAVERDRQWKFIMCRMTDYDCEFANV.

Gln-1 is subject to Pyrrolidone carboxylic acid. The residue at position 5 (Tyr-5) is a Sulfotyrosine. Repeat copies occupy residues 8-61 (PYQQ…ACMP), 52-57 (DRQWNY), 62-117 (TPQS…CCRY), and 107-112 (DREWQF). The segment at 8–117 (PYQQYHDYSD…REWQFYCCRY (110 aa)) is 2 X 53-55 AA tandem repeats. Intrachain disulfides connect Cys-32-Cys-59, Cys-72-Cys-114, Cys-88-Cys-115, Cys-121-Cys-178, and Cys-125-Cys-171. The 3 X 6 AA tandem repeats of D-R-[EQ]-W-[NQK]-[FY] stretch occupies residues 52-168 (DRQWNYACMP…AVERDRQWKF (117 aa)). Tyr-144, Tyr-146, Tyr-148, and Tyr-149 each carry sulfotyrosine. A 2-3 repeat occupies 163–168 (DRQWKF). Tyr-176 bears the Sulfotyrosine mark.

It belongs to the dermatopontin family. Interacts with TGFB1, DCN and collagen. In terms of processing, sulfated on tyrosine residue(s). As to expression, detected in skin, skeletal muscle, heart, lung, articular cartilage, long bone and calvaria. Smaller amounts detected in kidney. Not detected in brain, liver or spleen.

It is found in the secreted. The protein localises to the extracellular space. The protein resides in the extracellular matrix. Functionally, seems to mediate adhesion by cell surface integrin binding. May serve as a communication link between the dermal fibroblast cell surface and its extracellular matrix environment. Enhances TGFB1 activity. Inhibits cell proliferation. Accelerates collagen fibril formation, and stabilizes collagen fibrils against low-temperature dissociation. The polypeptide is Dermatopontin (DPT) (Sus scrofa (Pig)).